We begin with the raw amino-acid sequence, 72 residues long: Variant surface glycoprotein MITAT 1.1000BC (72 aa).

Aspartate 50 carries GPI-anchor amidated aspartate lipidation. Positions 51-72 are cleaved as a propeptide — removed in mature form; that stretch reads GSFLVNKKFALMVYDFVSLLAF.

The protein localises to the cell membrane. In terms of biological role, VSG forms a coat on the surface of the parasite. The trypanosome evades the immune response of the host by expressing a series of antigenically distinct VSGs from an estimated 1000 VSG genes. This chain is Variant surface glycoprotein MITAT 1.1000BC, found in Trypanosoma brucei brucei.